Here is a 20-residue protein sequence, read N- to C-terminus: Major extrapallial fluid protein (20 aa).

Residues 1-20 (NPVDDHHDDHHDAPIVEHHD) are disordered.

Homodimer. In terms of processing, glycosylated.

Its function is as follows. Appears to be a building block of the soluble organic matrix of the shell. The protein binds calcium. This is Major extrapallial fluid protein from Mytilus edulis (Blue mussel).